Consider the following 298-residue polypeptide: Ankyrin repeat domain-containing protein 29 (298 aa).

8 ANK repeats span residues 8–38 (PLANAVFWAARKGNLALLQLLLNSGRVDVDC), 42–71 (YGTTALMVASYSGHYECVRELIMQGADINL), 75–104 (TGSTALFFASQQGHNEIVKLLFEFGASTEF), 108–137 (DGGTALCAACQFGHSRVVDTLLKNGANVHD), 141–170 (DGATALFLASQEGHVNLIRQLLSSGAKVNQ), 174–203 (DGTAPLWMAAQMGHSEVVKVLLLRGADRDA), 207–236 (DGSTALFKAAHKGHCSVMEELLKFSPSLGI), and 239–268 (NGSTALHAAVMGGSLKAVDLLLKANADPAL).

The protein is Ankyrin repeat domain-containing protein 29 (ankrd29) of Danio rerio (Zebrafish).